Consider the following 263-residue polypeptide: 5'-nucleotidase SurE (263 aa).

A divalent metal cation contacts are provided by D8, D9, S40, and N98.

The protein belongs to the SurE nucleotidase family. The cofactor is a divalent metal cation.

Its subcellular location is the cytoplasm. It carries out the reaction a ribonucleoside 5'-phosphate + H2O = a ribonucleoside + phosphate. Nucleotidase that shows phosphatase activity on nucleoside 5'-monophosphates. This Gloeobacter violaceus (strain ATCC 29082 / PCC 7421) protein is 5'-nucleotidase SurE.